Consider the following 1401-residue polypeptide: DNA-directed RNA polymerase subunit beta'' (1401 aa).

Positions 224, 295, 302, and 305 each coordinate Zn(2+).

The protein belongs to the RNA polymerase beta' chain family. RpoC2 subfamily. In plastids the minimal PEP RNA polymerase catalytic core is composed of four subunits: alpha, beta, beta', and beta''. When a (nuclear-encoded) sigma factor is associated with the core the holoenzyme is formed, which can initiate transcription. Zn(2+) serves as cofactor.

It is found in the plastid. Its subcellular location is the chloroplast. It carries out the reaction RNA(n) + a ribonucleoside 5'-triphosphate = RNA(n+1) + diphosphate. Functionally, DNA-dependent RNA polymerase catalyzes the transcription of DNA into RNA using the four ribonucleoside triphosphates as substrates. The polypeptide is DNA-directed RNA polymerase subunit beta'' (Ipomoea purpurea (Common morning glory)).